Here is a 253-residue protein sequence, read N- to C-terminus: 3-deoxy-manno-octulosonate cytidylyltransferase (253 aa).

Belongs to the KdsB family.

It is found in the cytoplasm. It catalyses the reaction 3-deoxy-alpha-D-manno-oct-2-ulosonate + CTP = CMP-3-deoxy-beta-D-manno-octulosonate + diphosphate. The protein operates within nucleotide-sugar biosynthesis; CMP-3-deoxy-D-manno-octulosonate biosynthesis; CMP-3-deoxy-D-manno-octulosonate from 3-deoxy-D-manno-octulosonate and CTP: step 1/1. It participates in bacterial outer membrane biogenesis; lipopolysaccharide biosynthesis. Activates KDO (a required 8-carbon sugar) for incorporation into bacterial lipopolysaccharide in Gram-negative bacteria. The sequence is that of 3-deoxy-manno-octulosonate cytidylyltransferase from Acidithiobacillus ferrooxidans (strain ATCC 23270 / DSM 14882 / CIP 104768 / NCIMB 8455) (Ferrobacillus ferrooxidans (strain ATCC 23270)).